The following is a 322-amino-acid chain: Probable heme-iron transport system permease protein IsdF (322 aa).

The next 9 helical transmembrane spans lie at Leu-9 to Gly-29, Ile-61 to Ala-81, Ala-89 to Ile-109, Phe-114 to Leu-134, Val-143 to Leu-163, Ile-179 to Leu-199, Val-233 to Val-253, Val-267 to Gly-287, and Leu-294 to Ile-314.

This sequence belongs to the binding-protein-dependent transport system permease family. FecCD subfamily.

The protein resides in the cell membrane. Functionally, part of the binding-protein-dependent transport system for heme-iron. Responsible for the translocation of the substrate across the membrane. This Staphylococcus aureus (strain Mu3 / ATCC 700698) protein is Probable heme-iron transport system permease protein IsdF (isdF).